The following is a 72-amino-acid chain: Translation initiation factor IF-1 (72 aa).

The S1-like domain maps to 1-72 (MAKEDCIEME…SKGRIIYRAR (72 aa)).

Belongs to the IF-1 family. In terms of assembly, component of the 30S ribosomal translation pre-initiation complex which assembles on the 30S ribosome in the order IF-2 and IF-3, IF-1 and N-formylmethionyl-tRNA(fMet); mRNA recruitment can occur at any time during PIC assembly.

Its subcellular location is the cytoplasm. One of the essential components for the initiation of protein synthesis. Stabilizes the binding of IF-2 and IF-3 on the 30S subunit to which N-formylmethionyl-tRNA(fMet) subsequently binds. Helps modulate mRNA selection, yielding the 30S pre-initiation complex (PIC). Upon addition of the 50S ribosomal subunit IF-1, IF-2 and IF-3 are released leaving the mature 70S translation initiation complex. The protein is Translation initiation factor IF-1 of Pseudoalteromonas atlantica (strain T6c / ATCC BAA-1087).